Consider the following 581-residue polypeptide: MAFCISYVGALLPCSLSTRTKFAICHNTSKLHRAAYKTSRWNIPGDVGSTPPPSKLHQALCLNEHSLSCMAELPMDYEGKIKETRHLLHLKGENDPIESLIFVDATLRLGVNHHFQKEIEEILRKSYATMKSPIICEYHTLHEVSLFFRLMRQHGRYVSADVFNNFKGESGRFKEELKRDTRGLVELYEAAQLSFEGERILDEAENFSRQILHGNLAGMEDNLRRSVGNKLRYPFHTSIARFTGRNYDDDLGGMYEWGKTLRELALMDLQVERSVYQEELLQVSKWWNELGLYKKLNLARNRPFEFYTWSMVILADYINLSEQRVELTKSVAFIYLIDDIFDVYGTLDELIIFTEAVNKWDYSATDTLPENMKMCCMTLLDTINGTSQKIYEKHGYNPIDSLKTTWKSLCSAFLVEAKWSASGSLPSANEYLENEKVSSGVYVVLVHLFCLMGLGGTSRGSIELNDTQELMSSIAIIFRLWNDLGSAKNEHQNGKDGSYLNCYKKEHINLTAAQAHEHALELVAIEWKRLNKESFNLNHDSVSSFKQAALNLARMVPLMYSYDHNQRGPVLEEYVKFMLSD.

The transit peptide at methionine 1–serine 68 directs the protein to the chloroplast. 3 N-linked (GlcNAc...) asparagine glycosylation sites follow: asparagine 27, asparagine 206, and asparagine 319. Mg(2+) contacts are provided by aspartate 338 and aspartate 342. Positions aspartate 338 to aspartate 342 match the DDXXD motif motif. Asparagine 384 and asparagine 465 each carry an N-linked (GlcNAc...) asparagine glycan. 3 residues coordinate Mg(2+): asparagine 482, serine 486, and glutamate 490. Asparagine 509 is a glycosylation site (N-linked (GlcNAc...) asparagine).

The protein belongs to the terpene synthase family. Tpsg subfamily. Requires Mg(2+) as cofactor. It depends on Mn(2+) as a cofactor. Accumulates in flowers; mostly expressed in both upper and lower petal lobes, and, to a lower extent, in tube and stamens.

It localises to the plastid. Its subcellular location is the chloroplast stroma. It carries out the reaction (2E)-geranyl diphosphate = tricyclene + diphosphate. It catalyses the reaction (2E)-geranyl diphosphate = beta-myrcene + diphosphate. It participates in secondary metabolite biosynthesis; terpenoid biosynthesis. Its function is as follows. Contributes to floral scent emission. This chain is Tricyclene synthase Oc15, chloroplastic (Oc15), found in Antirrhinum majus (Garden snapdragon).